The primary structure comprises 117 residues: Ribonuclease P protein component (117 aa).

The protein belongs to the RnpA family. Consists of a catalytic RNA component (M1 or rnpB) and a protein subunit.

It carries out the reaction Endonucleolytic cleavage of RNA, removing 5'-extranucleotides from tRNA precursor.. RNaseP catalyzes the removal of the 5'-leader sequence from pre-tRNA to produce the mature 5'-terminus. It can also cleave other RNA substrates such as 4.5S RNA. The protein component plays an auxiliary but essential role in vivo by binding to the 5'-leader sequence and broadening the substrate specificity of the ribozyme. The protein is Ribonuclease P protein component of Nocardioides sp. (strain ATCC BAA-499 / JS614).